The primary structure comprises 613 residues: Dihydroxy-acid dehydratase (613 aa).

D81 provides a ligand contact to Mg(2+). Residue C122 coordinates [2Fe-2S] cluster. Mg(2+) contacts are provided by D123 and K124. An N6-carboxylysine modification is found at K124. C193 contacts [2Fe-2S] cluster. E489 is a binding site for Mg(2+). The active-site Proton acceptor is the S515.

This sequence belongs to the IlvD/Edd family. As to quaternary structure, homodimer. [2Fe-2S] cluster serves as cofactor. It depends on Mg(2+) as a cofactor.

The enzyme catalyses (2R)-2,3-dihydroxy-3-methylbutanoate = 3-methyl-2-oxobutanoate + H2O. It carries out the reaction (2R,3R)-2,3-dihydroxy-3-methylpentanoate = (S)-3-methyl-2-oxopentanoate + H2O. The protein operates within amino-acid biosynthesis; L-isoleucine biosynthesis; L-isoleucine from 2-oxobutanoate: step 3/4. It participates in amino-acid biosynthesis; L-valine biosynthesis; L-valine from pyruvate: step 3/4. In terms of biological role, functions in the biosynthesis of branched-chain amino acids. Catalyzes the dehydration of (2R,3R)-2,3-dihydroxy-3-methylpentanoate (2,3-dihydroxy-3-methylvalerate) into 2-oxo-3-methylpentanoate (2-oxo-3-methylvalerate) and of (2R)-2,3-dihydroxy-3-methylbutanoate (2,3-dihydroxyisovalerate) into 2-oxo-3-methylbutanoate (2-oxoisovalerate), the penultimate precursor to L-isoleucine and L-valine, respectively. This chain is Dihydroxy-acid dehydratase, found in Pseudomonas fluorescens (strain Pf0-1).